A 228-amino-acid polypeptide reads, in one-letter code: Non-fluorescent flavoprotein (228 aa).

The protein belongs to the bacterial luciferase oxidoreductase family. As to quaternary structure, homodimer. FMN serves as cofactor.

In Photobacterium leiognathi, this protein is Non-fluorescent flavoprotein (luxF).